A 169-amino-acid polypeptide reads, in one-letter code: Lipoprotein signal peptidase (169 aa).

The Cytoplasmic portion of the chain corresponds to 1–9 (MPDVDRFGR). Residues 10-30 (LPWLWITVLVFVLDQVSKAFF) traverse the membrane as a helical segment. Residues 31 to 67 (QAELSMYQQIVVIPDLFSWTLAYNTGAAFSFLADSSG) are Periplasmic-facing. A helical membrane pass occupies residues 68–89 (WQRWLFALIAIVVSASLVVWLK). Over 90–96 (RLKKGET) the chain is Cytoplasmic. A helical transmembrane segment spans residues 97–118 (WLAIALALVLGGALGNLYDRMV). The Periplasmic portion of the chain corresponds to 119 to 140 (LGHVVDFILVHWQNRWYFPAFN). Residues aspartate 124 and aspartate 143 contribute to the active site. Residues 141 to 154 (LADSAITVGAVMLA) form a helical membrane-spanning segment. The Cytoplasmic portion of the chain corresponds to 155–169 (LDMFRSKKSGEAAHG).

The protein belongs to the peptidase A8 family. As to quaternary structure, monomer in the crystal.

Its subcellular location is the cell inner membrane. The catalysed reaction is Release of signal peptides from bacterial membrane prolipoproteins. Hydrolyzes -Xaa-Yaa-Zaa-|-(S,diacylglyceryl)Cys-, in which Xaa is hydrophobic (preferably Leu), and Yaa (Ala or Ser) and Zaa (Gly or Ala) have small, neutral side chains.. The protein operates within protein modification; lipoprotein biosynthesis (signal peptide cleavage). Inhibited by globomycin. This protein specifically catalyzes the removal of signal peptides from prolipoproteins. This is Lipoprotein signal peptidase from Pseudomonas aeruginosa (strain ATCC 15692 / DSM 22644 / CIP 104116 / JCM 14847 / LMG 12228 / 1C / PRS 101 / PAO1).